The following is a 535-amino-acid chain: CTP synthase (535 aa).

The interval 1-266 (MKTKFIFITG…DERVVEKLNI (266 aa)) is amidoligase domain. Residue S14 participates in CTP binding. S14 is a UTP binding site. ATP contacts are provided by residues 15 to 20 (SIGKGL) and D72. 2 residues coordinate Mg(2+): D72 and E140. CTP-binding positions include 147 to 149 (DIE), 187 to 192 (KTKPTQ), and K223. Residues 187–192 (KTKPTQ) and K223 contribute to the UTP site. Residues 292–534 (RIAIVGKYVN…VRAALIQRDA (243 aa)) enclose the Glutamine amidotransferase type-1 domain. G354 is an L-glutamine binding site. C381 acts as the Nucleophile; for glutamine hydrolysis in catalysis. Residues 382 to 385 (LGMQ), E405, and R462 each bind L-glutamine. Residues H507 and E509 contribute to the active site.

It belongs to the CTP synthase family. Homotetramer.

It catalyses the reaction UTP + L-glutamine + ATP + H2O = CTP + L-glutamate + ADP + phosphate + 2 H(+). The enzyme catalyses L-glutamine + H2O = L-glutamate + NH4(+). It carries out the reaction UTP + NH4(+) + ATP = CTP + ADP + phosphate + 2 H(+). Its pathway is pyrimidine metabolism; CTP biosynthesis via de novo pathway; CTP from UDP: step 2/2. Its activity is regulated as follows. Allosterically activated by GTP, when glutamine is the substrate; GTP has no effect on the reaction when ammonia is the substrate. The allosteric effector GTP functions by stabilizing the protein conformation that binds the tetrahedral intermediate(s) formed during glutamine hydrolysis. Inhibited by the product CTP, via allosteric rather than competitive inhibition. Functionally, catalyzes the ATP-dependent amination of UTP to CTP with either L-glutamine or ammonia as the source of nitrogen. Regulates intracellular CTP levels through interactions with the four ribonucleotide triphosphates. In Pelobacter propionicus (strain DSM 2379 / NBRC 103807 / OttBd1), this protein is CTP synthase.